Consider the following 204-residue polypeptide: Large ribosomal subunit protein bL25 (204 aa).

This sequence belongs to the bacterial ribosomal protein bL25 family. CTC subfamily. In terms of assembly, part of the 50S ribosomal subunit; part of the 5S rRNA/L5/L18/L25 subcomplex. Contacts the 5S rRNA. Binds to the 5S rRNA independently of L5 and L18.

Its function is as follows. This is one of the proteins that binds to the 5S RNA in the ribosome where it forms part of the central protuberance. This Wolbachia sp. subsp. Brugia malayi (strain TRS) protein is Large ribosomal subunit protein bL25.